Here is a 568-residue protein sequence, read N- to C-terminus: Keratin, type I cytoskeletal 10 (568 aa).

A compositionally biased stretch (low complexity) spans 1–15; it reads MSVRYSSSKQYSSSR. A disordered region spans residues 1-31; that stretch reads MSVRYSSSKQYSSSRSGGGGGGGGGSSFRIS. The segment at 1–135 is head; the sequence is MSVRYSSSKQ…GGDGGLLSGN (135 aa). Phosphoserine occurs at positions 14, 16, 36, 47, 50, and 160. Gly residues predominate over residues 16–26; the sequence is SGGGGGGGGGS. A coil 1A region spans residues 136-171; that stretch reads EKVTMQNLNDRLASYLDKVRALEESNYELEGKIKEW. The IF rod domain occupies 136–450; it reads EKVTMQNLND…SLLEGEGSSG (315 aa). Positions 172–192 are linker 1; the sequence is YEKHGNSSQRAPRDYSKYYQT. Residues 193-284 form a coil 1B region; the sequence is IEDLKNQILN…KNHEEEMRDL (92 aa). A linker 12 region spans residues 285–307; it reads QNVSTGDVNVEMNAAPGVDLTEL. The interval 308–446 is coil 2; that stretch reads LNNMRNQYEQ…QTYRSLLEGE (139 aa). The interval 447 to 568 is tail; the sequence is GSSGGGGYGG…GESSSKGPRY (122 aa). Over residues 485 to 546 the composition is skewed to gly residues; that stretch reads GGGSSGGGGH…GGGYGGGSSS (62 aa). The disordered stretch occupies residues 485–568; sequence GGGSSGGGGH…GESSSKGPRY (84 aa). The span at 547–568 shows a compositional bias: low complexity; sequence SGGHKSSSSGSVGESSSKGPRY.

Belongs to the intermediate filament family. In terms of assembly, heterotetramer of two type I and two type II keratins. Heterodimer with KRT1. Two heterodimers of KRT1 and KRT10 form a heterotetramer. The KRT10 subunit in the heterotetramer is probably disulfide-linked. Expressed in skin.

Its subcellular location is the secreted. The protein resides in the extracellular space. It localises to the cell surface. It is found in the cytoplasm. Functionally, plays a role in the establishment of the epidermal barrier on plantar skin. Involved in the maintenance of cell layer development and keratin filament bundles in suprabasal cells of the epithelium. This Canis lupus familiaris (Dog) protein is Keratin, type I cytoskeletal 10.